Reading from the N-terminus, the 138-residue chain is Basic phospholipase A2 PLA-B' (138 aa).

A signal peptide spans 1–16 (MRTLWITAVLLVGVEG). 7 disulfide bridges follow: Cys42–Cys131, Cys44–Cys60, Cys59–Cys111, Cys65–Cys138, Cys66–Cys104, Cys73–Cys97, and Cys91–Cys102. Positions 43, 45, and 47 each coordinate Ca(2+). Residue His63 is part of the active site. Residue Asp64 participates in Ca(2+) binding. Asp105 is a catalytic residue.

Belongs to the phospholipase A2 family. Group II subfamily. D49 sub-subfamily. Ca(2+) serves as cofactor. In terms of tissue distribution, expressed by the venom gland.

The protein localises to the secreted. The catalysed reaction is a 1,2-diacyl-sn-glycero-3-phosphocholine + H2O = a 1-acyl-sn-glycero-3-phosphocholine + a fatty acid + H(+). PLA2 catalyzes the calcium-dependent hydrolysis of the 2-acyl groups in 3-sn-phosphoglycerides. The sequence is that of Basic phospholipase A2 PLA-B' from Protobothrops flavoviridis (Habu).